A 333-amino-acid polypeptide reads, in one-letter code: Protein VTE6, chloroplastic (333 aa).

Residues 1–65 (MATISSTLLL…SRADGATAAA (65 aa)) constitute a chloroplast transit peptide. Transmembrane regions (helical) follow at residues 94–114 (LLIFVLGSPLLVTGLSASGIA), 126–146 (AYGSAGFLLVAAYFVIGTAAT), 171–191 (VIGSSAAGCVCAFLSIYQVGG), 248–268 (TLAGLLASFFLASVGCFLGQI), 274–294 (AVCVLASQIANLGESIIGASF), and 307–327 (VVNVINISLGSIVAILMQQFI).

Belongs to the TMEM19 family.

It localises to the plastid. The protein localises to the chloroplast membrane. The enzyme catalyses phytyl phosphate + a ribonucleoside 5'-triphosphate = phytyl diphosphate + a ribonucleoside 5'-diphosphate. The catalysed reaction is phytyl phosphate + CTP = phytyl diphosphate + CDP. It participates in cofactor biosynthesis; tocopherol biosynthesis. Phytyl-phosphate kinase catalyzing the conversion of phytyl-monophosphate to phytyl-diphosphate. Involved in the activation and reutilization of phytol from chlorophyll degradation in plant metabolism, including tocopherol (vitamin E) biosynthesis. Involved in the biosynthesis of phylloquinone (vitamin K), which is required for the photosystem I (PSI) complex stability. This chain is Protein VTE6, chloroplastic, found in Arabidopsis thaliana (Mouse-ear cress).